We begin with the raw amino-acid sequence, 485 residues long: Glycogen synthase (485 aa).

Lys20 contacts ADP-alpha-D-glucose.

It belongs to the glycosyltransferase 1 family. Bacterial/plant glycogen synthase subfamily.

It carries out the reaction [(1-&gt;4)-alpha-D-glucosyl](n) + ADP-alpha-D-glucose = [(1-&gt;4)-alpha-D-glucosyl](n+1) + ADP + H(+). The protein operates within glycan biosynthesis; glycogen biosynthesis. In terms of biological role, synthesizes alpha-1,4-glucan chains using ADP-glucose. This chain is Glycogen synthase, found in Vibrio vulnificus (strain CMCP6).